The following is a 373-amino-acid chain: Dual-specificity RNA methyltransferase RlmN (373 aa).

Glu-94 serves as the catalytic Proton acceptor. The region spanning Glu-100–Asp-339 is the Radical SAM core domain. Cys-107 and Cys-344 are disulfide-bonded. The [4Fe-4S] cluster site is built by Cys-114, Cys-118, and Cys-121. Residues Gly-168–Glu-169, Ser-200, Ser-222–His-224, and Asn-301 contribute to the S-adenosyl-L-methionine site. Cys-344 (S-methylcysteine intermediate) is an active-site residue.

The protein belongs to the radical SAM superfamily. RlmN family. It depends on [4Fe-4S] cluster as a cofactor.

It is found in the cytoplasm. It carries out the reaction adenosine(2503) in 23S rRNA + 2 reduced [2Fe-2S]-[ferredoxin] + 2 S-adenosyl-L-methionine = 2-methyladenosine(2503) in 23S rRNA + 5'-deoxyadenosine + L-methionine + 2 oxidized [2Fe-2S]-[ferredoxin] + S-adenosyl-L-homocysteine. The catalysed reaction is adenosine(37) in tRNA + 2 reduced [2Fe-2S]-[ferredoxin] + 2 S-adenosyl-L-methionine = 2-methyladenosine(37) in tRNA + 5'-deoxyadenosine + L-methionine + 2 oxidized [2Fe-2S]-[ferredoxin] + S-adenosyl-L-homocysteine. Functionally, specifically methylates position 2 of adenine 2503 in 23S rRNA and position 2 of adenine 37 in tRNAs. m2A2503 modification seems to play a crucial role in the proofreading step occurring at the peptidyl transferase center and thus would serve to optimize ribosomal fidelity. This chain is Dual-specificity RNA methyltransferase RlmN, found in Shewanella sp. (strain ANA-3).